The sequence spans 637 residues: Chaperone protein HtpG (637 aa).

Residues 1–345 (MSHQETHGFQ…SNDLPLNVSR (345 aa)) form an a; substrate-binding region. A b region spans residues 346–562 (EILQDNKVTR…EGEMSSQMIK (217 aa)). The interval 563 to 637 (LMQAAGQPVP…VNQMLLKSVG (75 aa)) is c.

It belongs to the heat shock protein 90 family. Homodimer.

Its subcellular location is the cytoplasm. Molecular chaperone. Has ATPase activity. The chain is Chaperone protein HtpG from Shewanella amazonensis (strain ATCC BAA-1098 / SB2B).